A 1032-amino-acid chain; its full sequence is MADLLDKIMGSSSSNRIPKRDNRMNQDKDEPTSKRSAPMFSTPKSTTPIGRDSFATMDTMNVQMNMFPVDIKDMPHKIQRFQVDVIVCSSNGKQINANLGVLAAKGDVNSHNRRLAQYYIMRTVHDKLLVKFSGKSHHFLAYDCAATLYLPEGVYTGDDQEEVTLTIDDFPKEEWKFVSKLSRRKDDSYLVVLKPAGFVYTQGEVAQEEANRMELTRIIEIVTSQKLNNEDYLQFGNATFPRLSPPHSEPDAISEIRSGFAKVSRLSQNGGGKAFMTVDTKISPFYKDTSVIKFSSNKLSEMKGGGGGRGGYGRSDSRDSRGGYRGGRSDSRDFRGVYGNRGGNDRYRDESRGRRDMYDSRRDSGSSNGADYSPSDAAELEHAFGERGNTKRCIEEALKGLDVECTHLKGNLIRVSSIAENNAENTSFMMKDDKGEREVTVAEYFLLQYNIKLKYPRLPLVVSKRFKHESFFPMELLRIAPGQRIKVNKMSPTVQSAMTGRNASMPQHHVKLVQDILRDNLKLEQNKYMDAFGIKLMSTEPIQMTAKLLPPAQIKFKGQTYMPDMSRPAFRTQDKFVEPARIRKIGIVVFDNCIQMRQAEDFCDKLSNFCRDNGITVEKDSRDWSIRELNSSDSVAIQNLMKKWLDDRVDILVGIAREKKPDVHDILKYFEESIGLQTIQLCQQTVDKMMGGQGGRQTIDNVMRKFNLKCGGTNFFVEIPNAVRGKAVCSNNETLRKKLLEHVQFIGFEISHGASRTLFDRSRSQMDGEPSVVGVSYSLTNSTQLGGFTYLQTQKEYKLQKLDEFFPKCVRSYKEHSKTLPTRIVIYRVGAGEGNFNRVKEEVEEMRRTFDKIQPGYRPHLVVIIAQRASHARVFPSCISGNRATDQNIPSGTCVENVLTSYGYDEFILSSQTPLIGTVRPCKYTILVNDAKWSKNELMHLTYFRAFGHQVSYQPPSVPDVLYAAENLAKRGRNNYKIHQRYVNLQAVENRIIKDHSELINEDMREELAAAIVDEMSVAMNGMTIPKRNFWA.

2 disordered regions span residues 1-51 (MADL…PIGR) and 298-375 (KLSE…YSPS). Residues 1–551 (MADLLDKIMG…IQMTAKLLPP (551 aa)) are required to recruit the small-RNA amplification machinery to gene targets and promote gene silencing. Residues 18–33 (PKRDNRMNQDKDEPTS) show a composition bias toward basic and acidic residues. Gly residues predominate over residues 303 to 313 (KGGGGGRGGYG). Basic and acidic residues-rich tracts occupy residues 315 to 335 (SDSR…RDFR) and 343 to 364 (GNDR…RRDS). The 106-residue stretch at 376-481 (DAAELEHAFG…FPMELLRIAP (106 aa)) folds into the PAZ domain. In terms of domain architecture, Piwi spans 650–977 (DILVGIAREK…LAKRGRNNYK (328 aa)).

This sequence belongs to the argonaute family. WAGO subfamily. As to expression, expressed in the nuclei of male and female germ cells.

Its subcellular location is the cytoplasm. The protein localises to the cytoplasmic ribonucleoprotein granule. The protein resides in the nucleus. Its function is as follows. Argonaute protein which is involved in the endogenous small interfering RNA (endo-siRNA) pathway and is required for RNA-mediated gene silencing (RNAi) in the germline. Interacts with secondary 22G-RNAs in an hrde-2-dependent manner; 22G-RNAs are RNA-dependent RNA polymerase-derived endo-siRNAs, typically 22 nucleotides in length with a 5'-guanosine residue. Plays a key role in transgenerational epigenetic inheritance and germline immortality. May be involved in transgenerational gene silencing both by inducing subnuclear-co-localization of target genes into heterochromatin and by activation of small RNA amplification in the nuage. The protein is Argonaute protein hrde-1 of Caenorhabditis elegans.